The chain runs to 115 residues: Class I hydrophobin 21 (115 aa).

Positions 1-20 (MFAAPATMLVLAALAALSSA) are cleaved as a signal peptide. Intrachain disulfides connect Cys-30–Cys-93, Cys-37–Cys-87, Cys-38–Cys-77, and Cys-94–Cys-107.

It belongs to the fungal hydrophobin family. In terms of assembly, self-assembles to form functional amyloid fibrils called rodlets. Self-assembly into fibrillar rodlets occurs spontaneously at hydrophobic:hydrophilic interfaces and the rodlets further associate laterally to form amphipathic monolayers.

It is found in the secreted. Its subcellular location is the cell wall. Aerial growth, conidiation, and dispersal of filamentous fungi in the environment rely upon a capability of their secreting small amphipathic proteins called hydrophobins (HPBs) with low sequence identity. Class I can self-assemble into an outermost layer of rodlet bundles on aerial cell surfaces, conferring cellular hydrophobicity that supports fungal growth, development and dispersal; whereas Class II form highly ordered films at water-air interfaces through intermolecular interactions but contribute nothing to the rodlet structure. In Pleurotus ostreatus (strain PC15) (Oyster mushroom), this protein is Class I hydrophobin 21.